Here is a 527-residue protein sequence, read N- to C-terminus: Bifunctional purine biosynthesis protein PurH (527 aa).

The 149-residue stretch at 1-149 (MTADLLPVRR…KNFARVAVAT (149 aa)) folds into the MGS-like domain.

This sequence belongs to the PurH family.

The enzyme catalyses (6R)-10-formyltetrahydrofolate + 5-amino-1-(5-phospho-beta-D-ribosyl)imidazole-4-carboxamide = 5-formamido-1-(5-phospho-D-ribosyl)imidazole-4-carboxamide + (6S)-5,6,7,8-tetrahydrofolate. The catalysed reaction is IMP + H2O = 5-formamido-1-(5-phospho-D-ribosyl)imidazole-4-carboxamide. It participates in purine metabolism; IMP biosynthesis via de novo pathway; 5-formamido-1-(5-phospho-D-ribosyl)imidazole-4-carboxamide from 5-amino-1-(5-phospho-D-ribosyl)imidazole-4-carboxamide (10-formyl THF route): step 1/1. The protein operates within purine metabolism; IMP biosynthesis via de novo pathway; IMP from 5-formamido-1-(5-phospho-D-ribosyl)imidazole-4-carboxamide: step 1/1. This is Bifunctional purine biosynthesis protein PurH from Stenotrophomonas maltophilia (strain R551-3).